Reading from the N-terminus, the 129-residue chain is D-ribose pyranase 2 (129 aa).

The active-site Proton donor is the His20. Substrate is bound by residues Asp28, His96, and 118 to 120 (YAN).

This sequence belongs to the RbsD / FucU family. RbsD subfamily. In terms of assembly, homodecamer.

Its subcellular location is the cytoplasm. The catalysed reaction is beta-D-ribopyranose = beta-D-ribofuranose. Its pathway is carbohydrate metabolism; D-ribose degradation; D-ribose 5-phosphate from beta-D-ribopyranose: step 1/2. Its function is as follows. Catalyzes the interconversion of beta-pyran and beta-furan forms of D-ribose. In Streptomyces griseus subsp. griseus (strain JCM 4626 / CBS 651.72 / NBRC 13350 / KCC S-0626 / ISP 5235), this protein is D-ribose pyranase 2.